A 900-amino-acid polypeptide reads, in one-letter code: DNA mismatch repair protein MutS (900 aa).

637–644 contacts ATP; it reads GPNMAGKS.

It belongs to the DNA mismatch repair MutS family.

Functionally, this protein is involved in the repair of mismatches in DNA. It is possible that it carries out the mismatch recognition step. This protein has a weak ATPase activity. This Methanosarcina mazei (strain ATCC BAA-159 / DSM 3647 / Goe1 / Go1 / JCM 11833 / OCM 88) (Methanosarcina frisia) protein is DNA mismatch repair protein MutS.